The chain runs to 393 residues: G protein-activated inward rectifier potassium channel 3 (393 aa).

Positions 1-23 (MAQENAAFSPGQEEPPRRRGRQR) are disordered. Residues 1–57 (MAQENAAFSPGQEEPPRRRGRQRYVEKDGRCNVQQGNVRETYRYLTDLFTTLVDLQW) lie on the Cytoplasmic side of the membrane. Residues 58–82 (RLSLLFFVLAYALTWLFFGAIWWLI) form a helical membrane-spanning segment. Residues 83–106 (AYGRGDLEHLEDTAWTPCVNNLNG) are Extracellular-facing. The helical; Pore-forming intramembrane region spans 107–118 (FVAAFLFSIETE). The pore-forming intramembrane region spans 119-125 (TTIGYGH). A Selectivity filter motif is present at residues 120–125 (TIGYGH). Over 126-134 (RVITDQCPE) the chain is Extracellular. A helical transmembrane segment spans residues 135–156 (GIVLLLLQAILGSMVNAFMVGC). The Cytoplasmic segment spans residues 157–393 (MFVKISQPNK…LPPPESESKV (237 aa)). Residues 360–393 (KVEEEGAGEGAGGEAGADKEQNGCLPPPESESKV) form a disordered region. Over residues 384-393 (LPPPESESKV) the composition is skewed to pro residues. The PDZ-binding motif lies at 390 to 393 (ESKV).

The protein belongs to the inward rectifier-type potassium channel (TC 1.A.2.1) family. KCNJ9 subfamily. Associates with KCNJ3/GIRK1 to form a G-protein-activated heteromultimer pore-forming unit. Interacts (via PDZ-binding motif) with SNX27 (via PDZ domain); the interaction is required when endocytosed to prevent degradation in lysosomes and promote recycling to the plasma membrane.

The protein resides in the membrane. The catalysed reaction is K(+)(in) = K(+)(out). In terms of biological role, inward rectifier potassium channels are characterized by a greater tendency to allow potassium to flow into the cell rather than out of it. Their voltage dependence is regulated by the concentration of extracellular potassium; as external potassium is raised, the voltage range of the channel opening shifts to more positive voltages. The inward rectification is mainly due to the blockage of outward current by internal magnesium, This receptor is controlled by G proteins. Unable to produce channel activity when expressed alone. Forms a functional channel in association with KCNJ3/GIRK1. The sequence is that of G protein-activated inward rectifier potassium channel 3 (KCNJ9) from Homo sapiens (Human).